The following is a 347-amino-acid chain: 4-hydroxy-2-oxovalerate aldolase 1 (347 aa).

The Pyruvate carboxyltransferase domain maps to 11-263; sequence VVLHDMCLRD…ETGVDLFKLM (253 aa). 19–20 contacts substrate; sequence RD. Asp-20 contacts Mn(2+). The active-site Proton acceptor is the His-23. 2 residues coordinate substrate: Ser-173 and His-202. Mn(2+)-binding residues include His-202 and His-204. Tyr-293 contacts substrate.

It belongs to the 4-hydroxy-2-oxovalerate aldolase family.

The catalysed reaction is (S)-4-hydroxy-2-oxopentanoate = acetaldehyde + pyruvate. This chain is 4-hydroxy-2-oxovalerate aldolase 1 (lapG), found in Azoarcus sp. (strain BH72).